Consider the following 164-residue polypeptide: Inner membrane assembly complex subunit 17 (164 aa).

The N-terminal 28 residues, 1–28, are a transit peptide targeting the mitochondrion; it reads MIKTAKISTLRLAITRNARNLSFTTLVR. Residues 29 to 97 are Mitochondrial matrix-facing; the sequence is SPEVDNSKIK…NEVPLKRFTR (69 aa). A helical membrane pass occupies residues 98-118; sequence PLWIFILMASTFYLGAHLVWW. Topologically, residues 119 to 164 are mitochondrial intermembrane; sequence KLAYEKKEVELKHKVDSLETTLKDVMKEKATGPTPCNNKKSWYKFW. Residues 121–149 adopt a coiled-coil conformation; it reads AYEKKEVELKHKVDSLETTLKDVMKEKAT.

It belongs to the INA17 family. Component of the inner membrane assembly (INA) complex, composed of INA17 and INA22. Interacts with a subset of F(1)F(0)-ATP synthase subunits of the F(1)-domain and the peripheral stalk.

It is found in the mitochondrion inner membrane. In terms of biological role, component of the INA complex (INAC) that promotes the biogenesis of mitochondrial F(1)F(0)-ATP synthase. INAC facilitates the assembly of the peripheral stalk and promotes the assembly of the catalytic F(1)-domain with the membrane-embedded F(0)-domain. The sequence is that of Inner membrane assembly complex subunit 17 from Candida glabrata (strain ATCC 2001 / BCRC 20586 / JCM 3761 / NBRC 0622 / NRRL Y-65 / CBS 138) (Yeast).